Reading from the N-terminus, the 85-residue chain is Large ribosomal subunit protein bL27 (85 aa).

The segment at 1-21 (MAHKKGQGSTQNNRDSAGRRL) is disordered.

Belongs to the bacterial ribosomal protein bL27 family.

This chain is Large ribosomal subunit protein bL27, found in Nitratiruptor sp. (strain SB155-2).